The sequence spans 36 residues: Pancreatic polypeptide (36 aa).

Tyrosine amide is present on tyrosine 36.

It belongs to the NPY family.

It localises to the secreted. In terms of biological role, hormone secreted by pancreatic cells that acts as a regulator of pancreatic and gastrointestinal functions probably by signaling through the G protein-coupled receptor NPY4R2. This chain is Pancreatic polypeptide (PPY), found in Ceratotherium simum (White rhinoceros).